The primary structure comprises 560 residues: Chaperonin GroEL 2 (560 aa).

ATP is bound by residues 29–32 (TIGP), 86–90 (DGTTT), G413, and D492. The disordered stretch occupies residues 520-542 (DKPEPPSAPGAEGGDPMGGMGGM). Residues 530 to 542 (AEGGDPMGGMGGM) show a composition bias toward gly residues.

Belongs to the chaperonin (HSP60) family. In terms of assembly, forms a cylinder of 14 subunits composed of two heptameric rings stacked back-to-back. Interacts with the co-chaperonin GroES.

It is found in the cytoplasm. The catalysed reaction is ATP + H2O + a folded polypeptide = ADP + phosphate + an unfolded polypeptide.. Its function is as follows. Together with its co-chaperonin GroES, plays an essential role in assisting protein folding. The GroEL-GroES system forms a nano-cage that allows encapsulation of the non-native substrate proteins and provides a physical environment optimized to promote and accelerate protein folding. This chain is Chaperonin GroEL 2, found in Prochlorococcus marinus (strain NATL2A).